The following is a 41-amino-acid chain: Maticotoxin A (41 aa).

Cystine bridges form between cysteine 3–cysteine 22 and cysteine 15–cysteine 39.

The protein belongs to the three-finger toxin family. Short-chain subfamily. Expressed by the venom gland.

It localises to the secreted. The chain is Maticotoxin A from Calliophis bivirgatus (Blue Malaysian coral snake).